Here is a 188-residue protein sequence, read N- to C-terminus: Epididymal-specific lipocalin-5 (188 aa).

The first 19 residues, 1 to 19, serve as a signal peptide directing secretion; sequence MENIMPFALLGLCVGLAAG. A disulfide bridge connects residues cysteine 82 and cysteine 176.

This sequence belongs to the calycin superfamily. Lipocalin family. In terms of processing, there are two similar, immunologically cross-reacting forms of this protein, designated B and C, which probably result from different processing of the amino end. Post-translationally, the N-terminus of form C is probably blocked. Synthesized exclusively in the proximal part (caput epididymidis) of the epididymis. It makes up a substantial part of the total protein in the epididymal luminal fluid and binds to the sperm membrane.

The protein localises to the secreted. In terms of biological role, associates with spermatozoa in the epididymal fluid but does not bind tightly to them. Binds both all-trans and 9-cis retinoic acid. May act as a retinoid carrier protein which is required for epididymal function and/or sperm maturation. The sequence is that of Epididymal-specific lipocalin-5 (Lcn5) from Rattus norvegicus (Rat).